The sequence spans 39 residues: Cygnin (39 aa).

Glutamine 1 carries the post-translational modification Pyrrolidone carboxylic acid. Intrachain disulfides connect cysteine 6-cysteine 33, cysteine 12-cysteine 28, and cysteine 16-cysteine 32.

Belongs to the transferrin family.

This is Cygnin from Cygnus atratus (Black swan).